Reading from the N-terminus, the 383-residue chain is Deoxyguanosinetriphosphate triphosphohydrolase-like protein (383 aa).

The HD domain occupies 62–198 (RLTHSLEVST…AALADDISYI (137 aa)).

The protein belongs to the dGTPase family. Type 2 subfamily.

The polypeptide is Deoxyguanosinetriphosphate triphosphohydrolase-like protein (Rickettsia bellii (strain RML369-C)).